Here is a 308-residue protein sequence, read N- to C-terminus: Putative acetyl-hydrolase LipR (308 aa).

Residues 1–40 form the signal peptide; the sequence is MNLRKNVIRSVLRGARPLFASRRLGIAGRRVLLATLTAGA. Positions 76-78 match the Involved in the stabilization of the negatively charged intermediate by the formation of the oxyanion hole motif; it reads HGG. Residues Ser-146, Asp-239, and His-269 contribute to the active site.

Belongs to the 'GDXG' lipolytic enzyme family.

In terms of biological role, required for maintaining the appropriate mycolic acid composition and permeability of the envelope on its exposure to acidic pH. This Mycobacterium tuberculosis (strain ATCC 25618 / H37Rv) protein is Putative acetyl-hydrolase LipR (lipR).